The sequence spans 277 residues: Large ribosomal subunit protein uL2 (277 aa).

Disordered regions lie at residues lysine 37–histidine 60 and valine 223–threonine 264. Residues serine 39–isoleucine 49 are compositionally biased toward polar residues. Residues threonine 50–histidine 60 show a composition bias toward basic residues. The segment covering aspartate 229–glutamate 244 has biased composition (basic and acidic residues).

Belongs to the universal ribosomal protein uL2 family. As to quaternary structure, part of the 50S ribosomal subunit. Forms a bridge to the 30S subunit in the 70S ribosome.

In terms of biological role, one of the primary rRNA binding proteins. Required for association of the 30S and 50S subunits to form the 70S ribosome, for tRNA binding and peptide bond formation. It has been suggested to have peptidyltransferase activity; this is somewhat controversial. Makes several contacts with the 16S rRNA in the 70S ribosome. The protein is Large ribosomal subunit protein uL2 of Neisseria gonorrhoeae (strain ATCC 700825 / FA 1090).